A 177-amino-acid chain; its full sequence is Nucleoside triphosphate/diphosphate phosphatase (177 aa).

Arg-23 serves as the catalytic Proton donor. Mg(2+) is bound by residues Asn-87, Asp-103, Asp-105, Asp-107, Asp-120, and Glu-123.

It belongs to the Ntdp family. Mg(2+) is required as a cofactor.

The enzyme catalyses a ribonucleoside 5'-triphosphate + H2O = a ribonucleoside 5'-diphosphate + phosphate + H(+). The catalysed reaction is a ribonucleoside 5'-diphosphate + H2O = a ribonucleoside 5'-phosphate + phosphate + H(+). Functionally, has nucleoside phosphatase activity towards nucleoside triphosphates and nucleoside diphosphates. This Streptococcus equi subsp. zooepidemicus (strain MGCS10565) protein is Nucleoside triphosphate/diphosphate phosphatase.